The sequence spans 36 residues: Photosystem II reaction center protein M (36 aa).

Residues 5–25 form a helical membrane-spanning segment; that stretch reads ILGVIAVALFILIPTSFLLIL.

Belongs to the PsbM family. As to quaternary structure, PSII is composed of 1 copy each of membrane proteins PsbA, PsbB, PsbC, PsbD, PsbE, PsbF, PsbH, PsbI, PsbJ, PsbK, PsbL, PsbM, PsbT, PsbY, PsbZ, Psb30/Ycf12, at least 3 peripheral proteins of the oxygen-evolving complex and a large number of cofactors. It forms dimeric complexes.

The protein localises to the plastid. It localises to the chloroplast thylakoid membrane. In terms of biological role, one of the components of the core complex of photosystem II (PSII). PSII is a light-driven water:plastoquinone oxidoreductase that uses light energy to abstract electrons from H(2)O, generating O(2) and a proton gradient subsequently used for ATP formation. It consists of a core antenna complex that captures photons, and an electron transfer chain that converts photonic excitation into a charge separation. This subunit is found at the monomer-monomer interface. The sequence is that of Photosystem II reaction center protein M from Bigelowiella natans (Pedinomonas minutissima).